We begin with the raw amino-acid sequence, 102 residues long: NADH-quinone oxidoreductase subunit K (102 aa).

A run of 3 helical transmembrane segments spans residues 5–25 (ALTG…FGVL), 30–50 (ILFQ…AFIA), and 63–83 (MFVL…ALFL).

This sequence belongs to the complex I subunit 4L family. In terms of assembly, NDH-1 is composed of 14 different subunits. Subunits NuoA, H, J, K, L, M, N constitute the membrane sector of the complex.

The protein resides in the cell inner membrane. It catalyses the reaction a quinone + NADH + 5 H(+)(in) = a quinol + NAD(+) + 4 H(+)(out). Functionally, NDH-1 shuttles electrons from NADH, via FMN and iron-sulfur (Fe-S) centers, to quinones in the respiratory chain. The immediate electron acceptor for the enzyme in this species is believed to be ubiquinone. Couples the redox reaction to proton translocation (for every two electrons transferred, four hydrogen ions are translocated across the cytoplasmic membrane), and thus conserves the redox energy in a proton gradient. The sequence is that of NADH-quinone oxidoreductase subunit K from Rhodopseudomonas palustris (strain BisB18).